The following is a 292-amino-acid chain: Fat storage-inducing transmembrane protein 1 (292 aa).

The Lumenal portion of the chain corresponds to 1–18 (MERGPVVGAGLGAGARIQ). Residues 19-39 (ALLGCLLKVLLWVASALLYFG) traverse the membrane as a helical segment. At 40–54 (SEQAARLLGSPCLRR) the chain is on the cytoplasmic side. A helical membrane pass occupies residues 55 to 75 (LYHAWLAAVVIFGPLLQFHVN). Over 76-94 (PRTIFASHGNFFNIKFVNS) the chain is Lumenal. Residues 95 to 115 (AWGWTCTFLGGFVLLVVFLAT) traverse the membrane as a helical segment. Residues 116–141 (RRVAVTARHLSRLVVGAAVWRGAGRA) lie on the Cytoplasmic side of the membrane. A helical transmembrane segment spans residues 142 to 162 (FLLIEDLTGSCFEPLPQGLLL). Residues 163–187 (HELPDRRSCLAAGHQWRGYTVSSHT) lie on the Lumenal side of the membrane. The active site involves His186. Residues 188–208 (FLLTFCCLLMAEEAAVFAKYL) form a helical membrane-spanning segment. Residues 209-220 (AHGLPAGAPLRL) are Cytoplasmic-facing. The helical transmembrane segment at 221–241 (VFLLNVLLLGLWNFLLLCTVI) threads the bilayer. The Lumenal segment spans residues 242–249 (YFHQYTHK). Residue His244 is part of the active site. A helical membrane pass occupies residues 250–270 (VVGAAVGTFAWYLTYGSWYHQ). At 271–292 (PWSPGSPGHGLFPRPHSSRKHN) the chain is on the cytoplasmic side.

Belongs to the FIT family. FIT1 subfamily. In terms of tissue distribution, primarily expressed in heart and skeletal muscle.

Its subcellular location is the endoplasmic reticulum membrane. Its function is as follows. Plays an important role in the formation of lipid droplets (LDs) which are storage organelles at the center of lipid and energy homeostasis. Directly binds to diacylglycerol (DAGs) and triacylglycerol. This is Fat storage-inducing transmembrane protein 1 from Homo sapiens (Human).